A 104-amino-acid polypeptide reads, in one-letter code: Large ribosomal subunit protein uL24 (104 aa).

This sequence belongs to the universal ribosomal protein uL24 family. Part of the 50S ribosomal subunit.

One of two assembly initiator proteins, it binds directly to the 5'-end of the 23S rRNA, where it nucleates assembly of the 50S subunit. In terms of biological role, one of the proteins that surrounds the polypeptide exit tunnel on the outside of the subunit. The polypeptide is Large ribosomal subunit protein uL24 (Nitrobacter winogradskyi (strain ATCC 25391 / DSM 10237 / CIP 104748 / NCIMB 11846 / Nb-255)).